Reading from the N-terminus, the 604-residue chain is ERAD-associated E3 ubiquitin-protein ligase component HRD3B (604 aa).

Residues 1–25 (MRVSGQSIIAISLFTLSLYIHRVQA) form the signal peptide. The segment at 48-69 (ESSDFDEFGESEPKSEEELDPG) is disordered. N-linked (GlcNAc...) asparagine glycosylation is found at asparagine 78 and asparagine 105. 7 Sel1-like repeats span residues 125–160 (PHAQ…AGGN), 244–274 (VAMH…FSKA), 279–307 (LGYL…AANN), 311–344 (SGHY…ANAG), 346–380 (PKAF…AERG), 464–492 (AALL…YMYA), and 498–528 (AQAM…YDQA). A glycan (N-linked (GlcNAc...) asparagine) is linked at asparagine 293.

This sequence belongs to the sel-1 family.

May be involved in the endoplasmic reticulum (ER) quality control system called ER-associated degradation (ERAD). The sequence is that of ERAD-associated E3 ubiquitin-protein ligase component HRD3B from Arabidopsis thaliana (Mouse-ear cress).